A 728-amino-acid chain; its full sequence is Catalase-peroxidase 2 (728 aa).

The tryptophyl-tyrosyl-methioninium (Trp-Tyr) (with M-240) cross-link spans 91–214 (WHAAGTYRTG…LAAVQMGLIY (124 aa)). The active-site Proton acceptor is histidine 92. Positions 214–240 (YVNPEGPNGNPDPAKAAVDIRETFARM) form a cross-link, tryptophyl-tyrosyl-methioninium (Tyr-Met) (with W-91). Position 255 (histidine 255) interacts with heme b. The disordered stretch occupies residues 338–362 (WKPNGDAGANSIPDPYDPSRRRGPT).

This sequence belongs to the peroxidase family. Peroxidase/catalase subfamily. In terms of assembly, homodimer or homotetramer. Requires heme b as cofactor. Formation of the three residue Trp-Tyr-Met cross-link is important for the catalase, but not the peroxidase activity of the enzyme.

The catalysed reaction is H2O2 + AH2 = A + 2 H2O. It carries out the reaction 2 H2O2 = O2 + 2 H2O. Its function is as follows. Bifunctional enzyme with both catalase and broad-spectrum peroxidase activity. This is Catalase-peroxidase 2 from Cupriavidus pinatubonensis (strain JMP 134 / LMG 1197) (Cupriavidus necator (strain JMP 134)).